We begin with the raw amino-acid sequence, 460 residues long: tRNA modification GTPase MnmE (460 aa).

(6S)-5-formyl-5,6,7,8-tetrahydrofolate contacts are provided by arginine 24, glutamate 81, and lysine 121. The 167-residue stretch at 218–384 folds into the TrmE-type G domain; sequence GLVVAIAGPP…MVEALAGFAA (167 aa). GTP is bound by residues 228 to 233, 247 to 253, and 272 to 275; these read NVGKST, SPHAGTT, and DTAG. 2 residues coordinate Mg(2+): serine 232 and threonine 253. A (6S)-5-formyl-5,6,7,8-tetrahydrofolate-binding site is contributed by lysine 460.

It belongs to the TRAFAC class TrmE-Era-EngA-EngB-Septin-like GTPase superfamily. TrmE GTPase family. As to quaternary structure, homodimer. Heterotetramer of two MnmE and two MnmG subunits. K(+) is required as a cofactor.

It localises to the cytoplasm. Exhibits a very high intrinsic GTPase hydrolysis rate. Involved in the addition of a carboxymethylaminomethyl (cmnm) group at the wobble position (U34) of certain tRNAs, forming tRNA-cmnm(5)s(2)U34. The protein is tRNA modification GTPase MnmE of Rhodopseudomonas palustris (strain HaA2).